A 387-amino-acid polypeptide reads, in one-letter code: GTP-binding protein 10 (387 aa).

The 136-residue stretch at 13–148 folds into the Obg domain; sequence GNFIDKLRLF…RIIHLDLKLI (136 aa). Positions 149–344 constitute an OBG-type G domain; the sequence is ADVGLVGFPN…LKNCIRKSLD (196 aa). GTP is bound by residues 155–162, 202–206, and 278–281; these read GFPNAGKS, DLPGL, and NKMD.

This sequence belongs to the TRAFAC class OBG-HflX-like GTPase superfamily. OBG GTPase family.

It localises to the nucleus. The protein localises to the nucleolus. The protein resides in the chromosome. In terms of biological role, may be involved in the ribosome maturation process. Complements an ObgE(CgtA) function in E.coli ribosome maturation. Plays a role of GTPase in vitro. When missing, disorganization of the nucleolar architecture is observed. This chain is GTP-binding protein 10 (GTPBP10), found in Homo sapiens (Human).